The chain runs to 513 residues: Maturase K (513 aa).

It belongs to the intron maturase 2 family. MatK subfamily.

The protein localises to the plastid. It is found in the chloroplast. Functionally, usually encoded in the trnK tRNA gene intron. Probably assists in splicing its own and other chloroplast group II introns. In Pinus resinosa (Red pine), this protein is Maturase K.